The chain runs to 158 residues: E3 ubiquitin ligase complex SCF subunit sconC (158 aa).

Residues 100–158 are interaction with the F-box domain of F-box proteins; it reads ILAANYLDIKALLDVGCKTVANMIKGKSPEEIRKTFNIQNDFTPEEEDQIRRENEWAEE.

This sequence belongs to the SKP1 family. As to quaternary structure, component of the SCF (SKP1-CUL1-F-box protein) E3 ubiquitin ligase complexes.

Its pathway is protein modification; protein ubiquitination. Essential component of the SCF (SKP1-CUL1-F-box protein) E3 ubiquitin ligase complexes, which mediate the ubiquitination and subsequent proteasomal degradation of target proteins. Controls sulfur metabolite repression, probably by mediating the inactivation or degradation of the metR transcription factor. In Aspergillus fumigatus (strain CBS 144.89 / FGSC A1163 / CEA10) (Neosartorya fumigata), this protein is E3 ubiquitin ligase complex SCF subunit sconC (sconC).